The sequence spans 290 residues: Protease HtpX (290 aa).

Transmembrane regions (helical) follow at residues 4 to 24 and 36 to 56; these read IFLFLATNLAVLVIASITLKL and GSLLVFCAVFGFAGSLISLFI. Residue H142 participates in Zn(2+) binding. Residue E143 is part of the active site. Zn(2+) is bound at residue H146. Transmembrane regions (helical) follow at residues 150 to 170 and 193 to 213; these read GDMVTLALIQGVVNTFVMFFA and FVATIFAELVLGILASIIVMW. E219 lines the Zn(2+) pocket.

Belongs to the peptidase M48B family. It depends on Zn(2+) as a cofactor.

Its subcellular location is the cell inner membrane. This chain is Protease HtpX, found in Stutzerimonas stutzeri (strain A1501) (Pseudomonas stutzeri).